Reading from the N-terminus, the 137-residue chain is Large ribosomal subunit protein uL16 (137 aa).

It belongs to the universal ribosomal protein uL16 family. As to quaternary structure, part of the 50S ribosomal subunit.

Its function is as follows. Binds 23S rRNA and is also seen to make contacts with the A and possibly P site tRNAs. The protein is Large ribosomal subunit protein uL16 of Acinetobacter baylyi (strain ATCC 33305 / BD413 / ADP1).